A 47-amino-acid chain; its full sequence is Large ribosomal subunit protein bL34 (47 aa).

This sequence belongs to the bacterial ribosomal protein bL34 family.

This is Large ribosomal subunit protein bL34 from Mycobacterium avium (strain 104).